The sequence spans 259 residues: Eukaryotic translation initiation factor 3 subunit J (259 aa).

Residues 1–70 (MAAAAAAAAG…KEEAEVKPEV (70 aa)) are sufficient for interaction with EIF3B. The segment at 1 to 111 (MAAAAAAAAG…EPEESKVLTP (111 aa)) is disordered. Residues Ser12, Ser14, and Ser21 each carry the phosphoserine modification. Over residues 41-62 (EGEDEDEDVKDNWDDDDDENKE) the composition is skewed to acidic residues. Residues 63–107 (EAEVKPEVKISEKKKIAEKIKEKERQQKKRQEEIKKRLEEPEESK) show a composition bias toward basic and acidic residues. The stretch at 71–136 (KISEKKKIAE…ESDLELAKET (66 aa)) forms a coiled coil. A Glycyl lysine isopeptide (Lys-Gly) (interchain with G-Cter in SUMO2) cross-link involves residue Lys107. Thr110 is modified (phosphothreonine). The residue at position 128 (Ser128) is a Phosphoserine. The segment at 218-247 (SKAKKKKKGVVPGGGLKATMKDDLADYGGY) is disordered. Residues 244 to 259 (YGGYDGGYVQDYEDFM) are promotes stable association with the 40S ribosome. Tyr255 is subject to Phosphotyrosine.

Belongs to the eIF-3 subunit J family. In terms of assembly, component of the eukaryotic translation initiation factor 3 (eIF-3) complex, which is composed of 13 subunits: EIF3A, EIF3B, EIF3C, EIF3D, EIF3E, EIF3F, EIF3G, EIF3H, EIF3I, EIF3J, EIF3K, EIF3L and EIF3M. The eIF-3 complex appears to include 3 stable modules: module A is composed of EIF3A, EIF3B, EIF3G and EIF3I; module B is composed of EIF3F, EIF3H, and EIF3M; and module C is composed of EIF3C, EIF3D, EIF3E, EIF3K and EIF3L. EIF3C of module C binds EIF3B of module A and EIF3H of module B, thereby linking the three modules. EIF3J is a labile subunit that binds to the eIF-3 complex via EIF3B. The eIF-3 complex interacts with RPS6KB1 under conditions of nutrient depletion. Mitogenic stimulation leads to binding and activation of a complex composed of MTOR and RPTOR, leading to phosphorylation and release of RPS6KB1 and binding of EIF4B to eIF-3. Phosphorylated. Phosphorylation is enhanced upon serum stimulation.

It localises to the cytoplasm. Its function is as follows. Component of the eukaryotic translation initiation factor 3 (eIF-3) complex, which is required for several steps in the initiation of protein synthesis. The eIF-3 complex associates with the 40S ribosome and facilitates the recruitment of eIF-1, eIF-1A, eIF-2:GTP:methionyl-tRNAi and eIF-5 to form the 43S pre-initiation complex (43S PIC). The eIF-3 complex stimulates mRNA recruitment to the 43S PIC and scanning of the mRNA for AUG recognition. The eIF-3 complex is also required for disassembly and recycling of post-termination ribosomal complexes and subsequently prevents premature joining of the 40S and 60S ribosomal subunits prior to initiation. The eIF-3 complex specifically targets and initiates translation of a subset of mRNAs involved in cell proliferation, including cell cycling, differentiation and apoptosis, and uses different modes of RNA stem-loop binding to exert either translational activation or repression. This subunit binds directly within the mRNA entry channel of the 40S ribosome to the aminoacyl (A) site. It may regulate the interaction between the 43S PIC and mRNA. The sequence is that of Eukaryotic translation initiation factor 3 subunit J (Eif3j) from Rattus norvegicus (Rat).